We begin with the raw amino-acid sequence, 86 residues long: Beta-mammal/insect toxin To1 (86 aa).

A signal peptide spans 1 to 20 (MTRFVLFISCFFLIDMIVEC). An LCN-type CS-alpha/beta domain is found at 22-84 (KEGYLVGNDG…TWSSATNKCK (63 aa)). 4 disulfides stabilise this stretch: Cys32/Cys83, Cys36/Cys58, Cys44/Cys64, and Cys48/Cys66. Residue Lys84 is modified to Lysine amide.

It belongs to the long (4 C-C) scorpion toxin superfamily. Sodium channel inhibitor family. Beta subfamily. As to expression, expressed by the venom gland.

The protein resides in the secreted. In terms of biological role, beta toxin that show multiple effects. It enhances the open probability at more negative potentials of human Nav1.3/SCN3A and Nav1.6/SCN8A, of the insect channel BgNaV1 and of arachnid VdNaV1 channel. It promotes an important shift in slow inactivation processes as a function of the prepulse voltage in human Nav1.3/SCN3A and Nav1.6/SCN8A and a small shift in Nav1.1/SCN1A, Nav1.2/SCN2A and Nav1.4/SCN4A. Finally, it reduces the peak of sodium currents in Nav1.3/SCN3A (80% inhibition at 70 nM of toxin), Nav1.6/SCN8A (55.3%), Nav1.1/SCN1A (53.3%), Nav1.5/SCN5A (46.7%), Nav1.2/SCN2A (42.7%) and Nav1.4/SCN4A (20%) voltage-gated sodium channels. It has also been shown to affect the sodium current permeability of rat cerebellum granular cells in a partially reversible manner. In vivo, an intraperitoneal injection (20 ug) into mice produces excitability, respiratory problems, convulsions and death, within the first 30 minutes after injection. The polypeptide is Beta-mammal/insect toxin To1 (Tityus obscurus (Amazonian scorpion)).